The primary structure comprises 20 residues: Magnificalysin I (20 aa).

A plays an important role in the hemolytic activity region spans residues 1-10; it reads ALAGTIIAGA. The tract at residues 9–20 is N-terminal region; it reads GASLTFKILDEV.

This sequence belongs to the actinoporin family. Sea anemone subfamily. Octamer or nonamer in membranes. Monomer in the soluble state.

The protein localises to the secreted. It is found in the nematocyst. It localises to the target cell membrane. In terms of biological role, pore-forming protein that forms cations-selective hydrophilic pores of around 1 nm and causes cytolysis. Pore formation is a multi-step process that involves specific recognition of membrane sphingomyelin (but neither cholesterol nor phosphatidylcholine) using aromatic rich region and adjacent phosphocholine (POC) binding site, firm binding to the membrane (mainly driven by hydrophobic interactions) accompanied by the transfer of the N-terminal region to the lipid-water interface and finally pore formation after oligomerization of monomers. The protein is Magnificalysin I of Heteractis magnifica (Magnificent sea anemone).